A 117-amino-acid chain; its full sequence is Fluoride-specific ion channel FluC 2 (117 aa).

The next 2 helical transmembrane spans lie at 1 to 21 (MISIILVMIGGGLGAIARSAI) and 46 to 66 (FLIGLTIGLSISISWFPAFFV). Residues G71 and T74 each contribute to the Na(+) site. Residues 95 to 115 (LFLNYSLLQFIIGFIACYIGY) form a helical membrane-spanning segment.

Belongs to the fluoride channel Fluc/FEX (TC 1.A.43) family.

It is found in the cell membrane. It catalyses the reaction fluoride(in) = fluoride(out). Na(+) is not transported, but it plays an essential structural role and its presence is essential for fluoride channel function. In terms of biological role, fluoride-specific ion channel. Important for reducing fluoride concentration in the cell, thus reducing its toxicity. The polypeptide is Fluoride-specific ion channel FluC 2 (Staphylococcus aureus (strain MRSA252)).